We begin with the raw amino-acid sequence, 1025 residues long: Multidrug resistance protein MdtC (1025 aa).

The next 12 membrane-spanning stretches (helical) occupy residues Phe3 to Leu23, Glu333 to Leu353, Ile360 to Cys380, Leu387 to Leu407, Val431 to Leu451, Phe463 to Pro483, Leu528 to Pro548, Val853 to Ser873, Val875 to Leu895, Leu897 to Val917, Pro953 to Gly973, and Ile984 to Val1004.

This sequence belongs to the resistance-nodulation-cell division (RND) (TC 2.A.6) family. MdtC subfamily. As to quaternary structure, part of a tripartite efflux system composed of MdtA, MdtB and MdtC. MdtC forms a heteromultimer with MdtB.

It is found in the cell inner membrane. In terms of biological role, the MdtABC tripartite complex confers resistance against novobiocin and deoxycholate. The protein is Multidrug resistance protein MdtC of Escherichia coli O1:K1 / APEC.